The following is a 667-amino-acid chain: Acyl-coenzyme A oxidase acox-3 (667 aa).

Residues 138-141 (FCLT), 146-147 (GS), G178, R313, 334-337 (QQYR), and G410 contribute to the FAD site. Residue E433 is the Proton acceptor of the active site. E435 serves as a coordination point for FAD. A Microbody targeting signal motif is present at residues 665–667 (SKL).

It belongs to the acyl-CoA oxidase family. As to quaternary structure, homodimer. FAD is required as a cofactor. As to expression, expressed in intestine.

The protein localises to the peroxisome. The catalysed reaction is IC-asc-C7-CoA + O2 = IC-asc-DeltaC7-CoA + H2O2. It catalyses the reaction IC-asc-C9-CoA + O2 = IC-asc-DeltaC9-CoA + H2O2. The enzyme catalyses asc-C13-CoA + O2 = asc-DeltaC13-CoA + H2O2. The protein operates within lipid metabolism; peroxisomal fatty acid beta-oxidation. In contrast to other acyl-coenzyme A oxidases which bind to and are activated by ATP, does not bind ATP. In terms of biological role, involved in the first step of peroxisomal beta-oxidation by catalyzing the desaturation of fatty acid-derived side chains of ascaroside pheromones, which regulates development and behavior. Specifically, shortens indol-3-carbonyl(IC)-ascarosides with 7-carbon (IC-asc-C7) or 9-carbon (IC-asc-C9) side chains and contributes to the shortening of ascarosides with 13-carbon (asc-C13) and 15-carbon (asc-C15) side chains. This is Acyl-coenzyme A oxidase acox-3 from Caenorhabditis elegans.